Reading from the N-terminus, the 585-residue chain is MRKTKIVCTIGPASESEEMLEKLMNAGMNVARLNFSHGSHEEHKARIDTIRKVAKRLNKTIGLLLDTKGPEIRTHNMKDGLIVLEKGKEVIVSMNEVEGTPEKFSVTYENLINDVNIGSYILLDDGLVELQVKEINKDKGEVKCDILNTGELKNKKGVNLPGVKVNLPGITDKDADDIRFGIKENVDFIAASFVRRPSDVLDIRQILEEEKAEITIFPKIENQEGIDNIEEILEVSDGLMVARGDMGVEIPPESVPMVQKDLIRKCNKLGKPVITATQMLDSMQRNPRATRAEASDVANAIYDGTDAVMLSGETAAGQYPEEAVKTMRNIAVSAEAAQDYKKLLSDRTKLVETSLVNAIGVSVAHTALNLNVKAIVAATESGSTARTISKYRPHSDIIAVTPSEKTARQCAIVWGVNPVVKEGRKTTDALLNNAVATAVETGRVSNGDLIIITAGVPTGEKGTTNMMKIHLVGDEIAKGQGVGRGSVVGHAIVADSASDLEGKDLSDKVIITNSVDETLVPYVEKAIGLITEENGITSPSAIIGLEKGIPTVVGVEQATKEIKNDMLVTLDASQGKVFEGYANVL.

Residue arginine 32 participates in substrate binding. The K(+) site is built by asparagine 34, serine 36, aspartate 66, and threonine 67. An ATP-binding site is contributed by 34–37 (NFSH). 2 residues coordinate ATP: arginine 73 and lysine 156. Glutamate 221 is a binding site for Mg(2+). Glycine 244, aspartate 245, and threonine 277 together coordinate substrate. Aspartate 245 is a binding site for Mg(2+).

Belongs to the pyruvate kinase family. It in the C-terminal section; belongs to the PEP-utilizing enzyme family. The cofactor is Mg(2+). It depends on K(+) as a cofactor.

It carries out the reaction pyruvate + ATP = phosphoenolpyruvate + ADP + H(+). It participates in carbohydrate degradation; glycolysis; pyruvate from D-glyceraldehyde 3-phosphate: step 5/5. This chain is Pyruvate kinase (pyk), found in Staphylococcus epidermidis (strain ATCC 35984 / DSM 28319 / BCRC 17069 / CCUG 31568 / BM 3577 / RP62A).